The primary structure comprises 108 residues: TYRO protein tyrosine kinase-binding protein (108 aa).

An N-terminal signal peptide occupies residues 1 to 25 (MEGLRPSDRLLSLLLTVGGLSLVLA). Over 26 to 36 (QSECNCSSVSP) the chain is Extracellular. A helical transmembrane segment spans residues 37–57 (GVLAGIVLGDLMLTLLIALAV). Aspartate 46 is a binding site for Ca(2+). Residues 58-108 (YYLGRLVPRGRGATEVTRKQHIPETESPYQELQGQRTDVYSDLNTQRPYYK) are Cytoplasmic-facing. Positions 71–108 (TEVTRKQHIPETESPYQELQGQRTDVYSDLNTQRPYYK) are disordered. The region spanning 75–103 (RKQHIPETESPYQELQGQRTDVYSDLNTQ) is the ITAM domain. The span at 84 to 108 (SPYQELQGQRTDVYSDLNTQRPYYK) shows a compositional bias: polar residues. Phosphotyrosine occurs at positions 86 and 97.

The protein belongs to the TYROBP family. As to quaternary structure, homodimer; disulfide-linked. Homotrimer; disulfide-linked. Homotetramer; disulfide-linked. Homotrimers and homotetramers form when low levels of partner receptors are available and is competitive with assembly with interacting receptors. They may represent alternative oligomerization states or may be intermediates in the receptor assembly process. Binding of a metal cation aids in homooligomerization through coordination of the metal ion by the subunits of the oligomer. Interacts with TREM1. Interacts with TREM2. Interacts with CLECSF5. Interacts with CD300LB and CD300C2. Interacts with CD300E. Interacts (via ITAM domain) with SYK (via SH2 domains); activates SYK mediating neutrophils and macrophages integrin-mediated activation. Interacts with KLRC2. Interacts with CD300H. Interacts with KLRD1. Interacts with SIGLEC1. Following ligand binding by associated receptors, tyrosine phosphorylated in the ITAM domain which leads to activation of additional tyrosine kinases and subsequent cell activation.

The protein localises to the cell membrane. Its function is as follows. Adapter protein which non-covalently associates with activating receptors found on the surface of a variety of immune cells to mediate signaling and cell activation following ligand binding by the receptors. TYROBP is tyrosine-phosphorylated in the ITAM domain following ligand binding by the associated receptors which leads to activation of additional tyrosine kinases and subsequent cell activation. Also has an inhibitory role in some cells. Non-covalently associates with activating receptors of the CD300 family to mediate cell activation. Also mediates cell activation through association with activating receptors of the CD200R family. Required for neutrophil activation mediated by integrin. Required for the activation of myeloid cells mediated by the CLEC5A/MDL1 receptor. Associates with natural killer (NK) cell receptors such as the KLRD1/KLRC2 heterodimer to mediate NK cell activation. Associates with TREM1 to mediate activation of neutrophils and monocytes. Associates with TREM2 on monocyte-derived dendritic cells to mediate up-regulation of chemokine receptor CCR7 and dendritic cell maturation and survival. Association with TREM2 mediates cytokine-induced formation of multinucleated giant cells which are formed by the fusion of macrophages. Stabilizes the TREM2 C-terminal fragment (TREM2-CTF) produced by TREM2 ectodomain shedding which suppresses the release of pro-inflammatory cytokines. In microglia, required with TREM2 for phagocytosis of apoptotic neurons. Required with ITGAM/CD11B in microglia to control production of microglial superoxide ions which promote the neuronal apoptosis that occurs during brain development. Promotes pro-inflammatory responses in microglia following nerve injury which accelerates degeneration of injured neurons. Positively regulates the expression of the IRAK3/IRAK-M kinase and IL10 production by liver dendritic cells and inhibits their T cell allosimulatory ability. Negatively regulates B cell proliferation. Required for CSF1-mediated osteoclast cytoskeletal organization. Positively regulates multinucleation during osteoclast development. The sequence is that of TYRO protein tyrosine kinase-binding protein from Bos taurus (Bovine).